Reading from the N-terminus, the 121-residue chain is MKLKYTNKINKIRTFALSLVFVGILIMYVGIFFKEHPVIMVIAMILGFLAVIASTVVYFFIGLLSTRAVPVICPSCEKQTKVLGRVDACMHCDQPLTMDRSLEGKEFDEAYNSPASKKSQT.

The next 2 helical transmembrane spans lie at 14–34 (TFAL…IFFK) and 41–61 (VIAM…YFFI).

Belongs to the UPF0295 family.

The protein resides in the cell membrane. The polypeptide is UPF0295 protein ABC1323 (Shouchella clausii (strain KSM-K16) (Alkalihalobacillus clausii)).